The following is a 270-amino-acid chain: Non-homologous end joining protein Ku (270 aa).

In terms of domain architecture, Ku spans 10–194 (SLGLLNIGIK…NYPIQKQELT (185 aa)).

This sequence belongs to the prokaryotic Ku family. As to quaternary structure, homodimer. Interacts with LigD.

Its function is as follows. With LigD forms a non-homologous end joining (NHEJ) DNA repair enzyme, which repairs dsDNA breaks with reduced fidelity. Binds linear dsDNA with 5'- and 3'- overhangs but not closed circular dsDNA nor ssDNA. Recruits and stimulates the ligase activity of LigD. The chain is Non-homologous end joining protein Ku from Bacillus thuringiensis subsp. konkukian (strain 97-27).